A 258-amino-acid polypeptide reads, in one-letter code: Acetylglutamate kinase (258 aa).

Substrate-binding positions include 44-45 (GG), Arg-66, and Asn-158. Residues 181 to 186 (DVSGIL) and 209 to 211 (IIT) contribute to the ATP site.

This sequence belongs to the acetylglutamate kinase family. ArgB subfamily. Homodimer.

The protein resides in the cytoplasm. It carries out the reaction N-acetyl-L-glutamate + ATP = N-acetyl-L-glutamyl 5-phosphate + ADP. It functions in the pathway amino-acid biosynthesis; L-arginine biosynthesis; N(2)-acetyl-L-ornithine from L-glutamate: step 2/4. Functionally, catalyzes the ATP-dependent phosphorylation of N-acetyl-L-glutamate. This is Acetylglutamate kinase from Shigella sonnei (strain Ss046).